Here is a 138-residue protein sequence, read N- to C-terminus: Basic phospholipase A2 homolog Tpu-K49a (138 aa).

The signal sequence occupies residues 1–16; it reads MRTLWIMAVLLVGVEG. Intrachain disulfides connect C42-C131, C44-C60, C59-C111, C65-C138, C66-C104, and C91-C102. The segment at 121–133 is important for membrane-damaging activities in eukaryotes and bacteria; heparin-binding; the sequence is KKERINTKIFCKK.

As to quaternary structure, monomer. Expressed by the venom gland.

It localises to the secreted. In terms of biological role, snake venom phospholipase A2 homolog that lacks catalytic activity. Induces local edema a few hours after injection in the hind foot. Is myotoxic. A model of myotoxic mechanism has been proposed: an apo Lys49-PLA2 is activated by the entrance of a hydrophobic molecule (e.g. fatty acid) at the hydrophobic channel of the protein leading to a reorientation of a monomer. This reorientation causes a transition between 'inactive' to 'active' states, causing alignment of C-terminal and membrane-docking sites (MDoS) side-by-side and putting the membrane-disruption sites (MDiS) in the same plane, exposed to solvent and in a symmetric position for both monomers. The MDoS region stabilizes the toxin on membrane by the interaction of charged residues with phospholipid head groups. Subsequently, the MDiS region destabilizes the membrane with penetration of hydrophobic residues. This insertion causes a disorganization of the membrane, allowing an uncontrolled influx of ions (i.e. calcium and sodium), and eventually triggering irreversible intracellular alterations and cell death. This is Basic phospholipase A2 homolog Tpu-K49a from Craspedocephalus puniceus (Flat-nosed pitviper).